A 555-amino-acid polypeptide reads, in one-letter code: MEWLYNLFLEHSALQAVVVLSLISAIGLGLGRVHFWGVSLGVTFVFFAGILAGHFGLSVDPQMLNYAESFGLVIFVYSLGLQVGPGFFSSFRKGGVTLNMLALAVVLLGTLLTVVASYATGVSLPDMVGILCGATTNTPALGAAQQTLKQMGIESSTPALGCAVAYPMGVIGVILAVLLIRKFLVHKEDLEIKEKDDANKTFIAAFQVHNPAIFNKSIKDIAQMSYPKFVISRLWRDGHVSIPTSDKVLKEGDRLLVITAEKNVLALTVLFGEQEENTDWNKEDIDWNAIDSELISQRIVVTRPELNGKKLGSLRLRNHYGINISRVYRSGVQLLATPELILQLGDRLTVVGEAAAIQNVEKVLGNAVKSLKEPNLVVIFIGIVLGLALGAIPFSIPGISTPVKLGLAGGPIIVGILLGTFGPRIHMITYTTRSANLMLRALGLSMYLACLGLDAGAHFFDTVFRPEGLLWIALGAGLTIIPTVLVGFVAFKIMKIDFGSVSGMLCGSMANPMALNYANDTIPGDNPSVAYATVYPLCMFLRVIIAQVLLMFLLG.

5 helical membrane-spanning segments follow: residues 13 to 30 (ALQA…GLGL), 35 to 57 (FWGV…HFGL), 72 to 91 (LVIF…FSSF), 98 to 120 (LNML…SYAT), and 157 to 179 (TPAL…AVLL). 2 consecutive RCK C-terminal domains span residues 188–273 (EDLE…LFGE) and 282–366 (KEDI…VLGN). 6 helical membrane-spanning segments follow: residues 376-398 (LVVI…SIPG), 408-430 (AGGP…MITY), 437-459 (LMLR…GAHF), 469-491 (LLWI…FVAF), 498-517 (FGSV…ALNY), and 532-554 (ATVY…MFLL).

Belongs to the AAE transporter (TC 2.A.81) family.

It is found in the cell membrane. This is an uncharacterized protein from Bacteroides thetaiotaomicron (strain ATCC 29148 / DSM 2079 / JCM 5827 / CCUG 10774 / NCTC 10582 / VPI-5482 / E50).